The following is a 704-amino-acid chain: Seven transmembrane domain-containing serine/threonine-protein kinase 2 (704 aa).

Residues 1-5 (MPSKE) lie on the Extracellular side of the membrane. Residues 6-26 (FIIPLILLCFYSVNGFVAVIS) traverse the membrane as a helical segment. The Cytoplasmic segment spans residues 27–42 (SLVELFIHKASWNSIK). Residues 43–63 (IFFYSLLILQCLCRCIIIGWG) form a helical membrane-spanning segment. Topologically, residues 64–76 (MIETVQGGEFYSN) are extracellular. The chain crosses the membrane as a helical span at residues 77–97 (FPSLLFISYAGLVALQMIQFL). Residues 98-121 (PNDNQYLLLSEGKKNNHKVKVGTN) lie on the Cytoplasmic side of the membrane. Residues 122–142 (ILIFFNLFMYFGMFLLFGIAE) traverse the membrane as a helical segment. At 143 to 185 (KQVGNSTSFNHHGNHNSTTSTSTDEIPLVSTEVGELYLFGDKD) the chain is on the extracellular side. Residues Asn-147 and Asn-158 are each glycosylated (N-linked (GlcNAc...) asparagine). A helical transmembrane segment spans residues 186-206 (PIYIVLDCFYFVCLLLLLIFH). The Cytoplasmic segment spans residues 207-224 (SYVGWKTYKRNKDLFGIK). Residues 225–245 (LNVIHLILLICIFIRSLLVII) form a helical membrane-spanning segment. Topologically, residues 246 to 265 (DPSSPNNSILHIDTESWLIY) are extracellular. The N-linked (GlcNAc...) asparagine glycan is linked to Asn-251. Residues 266-286 (IYTISYYVVGEIIPGMLLIVI) traverse the membrane as a helical segment. Residues 287 to 704 (EFLLPYHKRK…WSIEKDSSSK (418 aa)) lie on the Cytoplasmic side of the membrane. In terms of domain architecture, Protein kinase spans 317–682 (IAIHELLGMG…SLGVKFHLAN (366 aa)). ATP contacts are provided by residues 323–331 (LGMGGSGAM) and Lys-350. Asp-506 acts as the Proton acceptor in catalysis.

It belongs to the protein kinase superfamily. Ser/Thr protein kinase family.

The protein localises to the membrane. The catalysed reaction is L-seryl-[protein] + ATP = O-phospho-L-seryl-[protein] + ADP + H(+). It catalyses the reaction L-threonyl-[protein] + ATP = O-phospho-L-threonyl-[protein] + ADP + H(+). The protein is Seven transmembrane domain-containing serine/threonine-protein kinase 2 (7tmk2) of Dictyostelium discoideum (Social amoeba).